Here is a 408-residue protein sequence, read N- to C-terminus: Na(+)-translocating NADH-quinone reductase subunit F (408 aa).

A helical membrane pass occupies residues 4–24 (VYLGVGMFTAIVLVLVLVILF). The 95-residue stretch at 33-127 (GDIIIGINGD…DMEIELDEEI (95 aa)) folds into the 2Fe-2S ferredoxin-type domain. Cys-70, Cys-76, Cys-79, and Cys-111 together coordinate [2Fe-2S] cluster. The 141-residue stretch at 130 to 270 (IKKWECDVIS…SGPFGEFFAK (141 aa)) folds into the FAD-binding FR-type domain.

Belongs to the NqrF family. As to quaternary structure, composed of six subunits; NqrA, NqrB, NqrC, NqrD, NqrE and NqrF. The cofactor is [2Fe-2S] cluster. It depends on FAD as a cofactor.

Its subcellular location is the cell inner membrane. It catalyses the reaction a ubiquinone + n Na(+)(in) + NADH + H(+) = a ubiquinol + n Na(+)(out) + NAD(+). In terms of biological role, NQR complex catalyzes the reduction of ubiquinone-1 to ubiquinol by two successive reactions, coupled with the transport of Na(+) ions from the cytoplasm to the periplasm. The first step is catalyzed by NqrF, which accepts electrons from NADH and reduces ubiquinone-1 to ubisemiquinone by a one-electron transfer pathway. This chain is Na(+)-translocating NADH-quinone reductase subunit F, found in Shewanella denitrificans (strain OS217 / ATCC BAA-1090 / DSM 15013).